The following is a 535-amino-acid chain: GMP synthase [glutamine-hydrolyzing] (535 aa).

A Glutamine amidotransferase type-1 domain is found at L21–T211. The Nucleophile role is filled by C98. Active-site residues include H185 and E187. The GMPS ATP-PPase domain maps to W212–R410. S239–S245 provides a ligand contact to ATP.

Homodimer.

It catalyses the reaction XMP + L-glutamine + ATP + H2O = GMP + L-glutamate + AMP + diphosphate + 2 H(+). It functions in the pathway purine metabolism; GMP biosynthesis; GMP from XMP (L-Gln route): step 1/1. In terms of biological role, catalyzes the synthesis of GMP from XMP. The protein is GMP synthase [glutamine-hydrolyzing] of Thermosynechococcus vestitus (strain NIES-2133 / IAM M-273 / BP-1).